Reading from the N-terminus, the 98-residue chain is Integration host factor subunit alpha (98 aa).

Residues 53–69 (DLREKSERPGRNPKTGE) show a composition bias toward basic and acidic residues. The tract at residues 53-73 (DLREKSERPGRNPKTGEDIPI) is disordered.

The protein belongs to the bacterial histone-like protein family. In terms of assembly, heterodimer of an alpha and a beta chain.

This protein is one of the two subunits of integration host factor, a specific DNA-binding protein that functions in genetic recombination as well as in transcriptional and translational control. This Aliivibrio salmonicida (strain LFI1238) (Vibrio salmonicida (strain LFI1238)) protein is Integration host factor subunit alpha.